The following is a 316-amino-acid chain: 1-phosphofructokinase (316 aa).

Residues 225–230 (SMGAGG) and 256–257 (GD) each bind ATP. Asp257 (proton acceptor) is an active-site residue.

This sequence belongs to the carbohydrate kinase PfkB family.

It carries out the reaction beta-D-fructose 1-phosphate + ATP = beta-D-fructose 1,6-bisphosphate + ADP + H(+). In terms of biological role, catalyzes the ATP-dependent phosphorylation of fructose-l-phosphate to fructose-l,6-bisphosphate. The protein is 1-phosphofructokinase of Rhodobacter capsulatus (Rhodopseudomonas capsulata).